We begin with the raw amino-acid sequence, 449 residues long: XK-related protein 2 (449 aa).

10 helical membrane passes run 35–55 (FSILFSTFLYCGEAASALYMV), 68–88 (TYTFSFFMFSSIMVQLTLIFV), 98–118 (LSLFMHLILLGPVIRCLEAMI), 174–194 (IQAFLGSVPQLTYQLYVSLIS), 204–224 (LMAFSLISVTYGATLCNMLAI), 241–261 (LCITVWRTLEITSRLVILVLF), 269–289 (AVPFLVLNFLIILFEPWVKFW), 306–326 (VGTLVVLISVTILYAGINFSC), 357–377 (LVENVIMVLVFKYFGVKVLLN), and 382–402 (LIAVQLIIAYLISIGVMLLFF).

Belongs to the XK family.

It localises to the membrane. The protein is XK-related protein 2 (Xkrx) of Mus musculus (Mouse).